A 436-amino-acid polypeptide reads, in one-letter code: Eukaryotic peptide chain release factor subunit 1-1 (436 aa).

This sequence belongs to the eukaryotic release factor 1 family. In terms of assembly, heterodimer of two subunits, one of which binds GTP.

It is found in the cytoplasm. Directs the termination of nascent peptide synthesis (translation) in response to the termination codons UAA, UAG and UGA. Modulates plant growth and development. This chain is Eukaryotic peptide chain release factor subunit 1-1 (ERF1-1), found in Arabidopsis thaliana (Mouse-ear cress).